A 153-amino-acid chain; its full sequence is Pheromone-binding protein Gp-9 (153 aa).

An N-terminal signal peptide occupies residues 1–19 (MKTFVLHIFIFALVAFASA). 3 cysteine pairs are disulfide-bonded: C37-C77, C73-C129, and C118-C138.

It belongs to the PBP/GOBP family. Homodimer.

The protein resides in the secreted. Its function is as follows. Colony queen number, a major feature of social organization, is associated with worker genotype for Gp-9. Colonies are headed by either a single reproductive queen (monogyne form) or multiple queens (polygyne form). Differences in worker Gp-9 genotypes between social forms may cause differences in workers' abilities to recognize queens and regulate their numbers. In Solenopsis electra (Fire ant), this protein is Pheromone-binding protein Gp-9.